Consider the following 253-residue polypeptide: Imidazole glycerol phosphate synthase subunit HisF (253 aa).

Catalysis depends on residues Asp-11 and Asp-130.

It belongs to the HisA/HisF family. Heterodimer of HisH and HisF.

It is found in the cytoplasm. It carries out the reaction 5-[(5-phospho-1-deoxy-D-ribulos-1-ylimino)methylamino]-1-(5-phospho-beta-D-ribosyl)imidazole-4-carboxamide + L-glutamine = D-erythro-1-(imidazol-4-yl)glycerol 3-phosphate + 5-amino-1-(5-phospho-beta-D-ribosyl)imidazole-4-carboxamide + L-glutamate + H(+). It participates in amino-acid biosynthesis; L-histidine biosynthesis; L-histidine from 5-phospho-alpha-D-ribose 1-diphosphate: step 5/9. Its function is as follows. IGPS catalyzes the conversion of PRFAR and glutamine to IGP, AICAR and glutamate. The HisF subunit catalyzes the cyclization activity that produces IGP and AICAR from PRFAR using the ammonia provided by the HisH subunit. The protein is Imidazole glycerol phosphate synthase subunit HisF of Dinoroseobacter shibae (strain DSM 16493 / NCIMB 14021 / DFL 12).